The primary structure comprises 150 residues: SsrA-binding protein (150 aa).

The disordered stretch occupies residues aspartate 130–arginine 150.

This sequence belongs to the SmpB family.

Its subcellular location is the cytoplasm. Required for rescue of stalled ribosomes mediated by trans-translation. Binds to transfer-messenger RNA (tmRNA), required for stable association of tmRNA with ribosomes. tmRNA and SmpB together mimic tRNA shape, replacing the anticodon stem-loop with SmpB. tmRNA is encoded by the ssrA gene; the 2 termini fold to resemble tRNA(Ala) and it encodes a 'tag peptide', a short internal open reading frame. During trans-translation Ala-aminoacylated tmRNA acts like a tRNA, entering the A-site of stalled ribosomes, displacing the stalled mRNA. The ribosome then switches to translate the ORF on the tmRNA; the nascent peptide is terminated with the 'tag peptide' encoded by the tmRNA and targeted for degradation. The ribosome is freed to recommence translation, which seems to be the essential function of trans-translation. The polypeptide is SsrA-binding protein (Phocaeicola vulgatus (strain ATCC 8482 / DSM 1447 / JCM 5826 / CCUG 4940 / NBRC 14291 / NCTC 11154) (Bacteroides vulgatus)).